Reading from the N-terminus, the 239-residue chain is 4-hydroxy-tetrahydrodipicolinate reductase (239 aa).

NAD(+) is bound by residues 9-14, 78-80, and 104-107; these read GINGKI, GTT, and APNF. The active-site Proton donor/acceptor is His134. His135 is a (S)-2,3,4,5-tetrahydrodipicolinate binding site. Lys138 (proton donor) is an active-site residue. Residue 144–145 coordinates (S)-2,3,4,5-tetrahydrodipicolinate; it reads GT.

This sequence belongs to the DapB family.

The protein localises to the cytoplasm. The enzyme catalyses (S)-2,3,4,5-tetrahydrodipicolinate + NAD(+) + H2O = (2S,4S)-4-hydroxy-2,3,4,5-tetrahydrodipicolinate + NADH + H(+). The catalysed reaction is (S)-2,3,4,5-tetrahydrodipicolinate + NADP(+) + H2O = (2S,4S)-4-hydroxy-2,3,4,5-tetrahydrodipicolinate + NADPH + H(+). The protein operates within amino-acid biosynthesis; L-lysine biosynthesis via DAP pathway; (S)-tetrahydrodipicolinate from L-aspartate: step 4/4. Catalyzes the conversion of 4-hydroxy-tetrahydrodipicolinate (HTPA) to tetrahydrodipicolinate. This is 4-hydroxy-tetrahydrodipicolinate reductase from Coxiella burnetii (strain CbuG_Q212) (Coxiella burnetii (strain Q212)).